Consider the following 522-residue polypeptide: Acetylcholine receptor subunit delta (522 aa).

The first 21 residues, 1 to 21, serve as a signal peptide directing secretion; that stretch reads MGNIHFVYLLISCLYYSGCSG. Residues 22–245 are Extracellular-facing; it reads VNEEERLIND…VTFYLIIRRK (224 aa). 3 N-linked (GlcNAc...) asparagine glycosylation sites follow: Asn-91, Asn-164, and Asn-229. An intrachain disulfide couples Cys-151 to Cys-165. 3 helical membrane passes run 246-270, 278-295, and 312-333; these read PLFYVINFITPCVLISFLASLAFYL, MSTAISVLLAQAVFLLLT, and YLMFIMSLVTGVIVNCGIVLNF. At 334–476 the chain is on the cytoplasmic side; the sequence is HFRTPSTHVL…WNLVGQTIDR (143 aa). Tyr-393 is subject to Phosphotyrosine; by Tyr-kinases. The chain crosses the membrane as a helical span at residues 477 to 497; it reads LSMFIITPVMVLGTIFIFVMG.

It belongs to the ligand-gated ion channel (TC 1.A.9) family. Acetylcholine receptor (TC 1.A.9.1) subfamily. As to quaternary structure, pentamer of two alpha chains, and one each of the beta, delta, and gamma chains.

The protein resides in the postsynaptic cell membrane. It localises to the cell membrane. The enzyme catalyses K(+)(in) = K(+)(out). It carries out the reaction Na(+)(in) = Na(+)(out). Its function is as follows. After binding acetylcholine, the AChR responds by an extensive change in conformation that affects all subunits and leads to opening of an ion-conducting channel across the plasma membrane. This is Acetylcholine receptor subunit delta (chrnd) from Tetronarce californica (Pacific electric ray).